The primary structure comprises 129 residues: Cortical cell-delineating protein (129 aa).

Positions 1 to 19 (MAPKVALFLALSLLFAATA) form a signal peptide, or 21. Asn25 carries N-linked (GlcNAc...) asparagine glycosylation. Tandem repeats lie at residues 29–34 (PVVPTP) and 35–40 (PVVPTP). The tract at residues 29 to 40 (PVVPTPPVVPTP) is 2 X 6 AA tandem repeats of P-V-V-P-T-P.

The protein to carrot DC2.15 and PEMB3. In terms of tissue distribution, cortical ground meristem of developing roots.

Functionally, delineates a novel subset of developing cortical cells. It is probably involved in some aspect of transport of molecules to or from the vasculature. The polypeptide is Cortical cell-delineating protein (Zea mays (Maize)).